A 76-amino-acid chain; its full sequence is Amyloid protein A (76 aa).

This sequence belongs to the SAA family. As to expression, expressed by the liver; secreted in plasma.

It localises to the secreted. Major acute phase reactant. Apolipoprotein of the HDL complex. This Macaca mulatta (Rhesus macaque) protein is Amyloid protein A (SAA1).